The following is a 274-amino-acid chain: Pyrroline-5-carboxylate reductase 3 (274 aa).

Position 2 is an N-acetylalanine (Ala2).

This sequence belongs to the pyrroline-5-carboxylate reductase family. In terms of assembly, homodecamer; composed of 5 homodimers.

Its subcellular location is the cytoplasm. The enzyme catalyses L-proline + NADP(+) = (S)-1-pyrroline-5-carboxylate + NADPH + 2 H(+). It carries out the reaction L-proline + NAD(+) = (S)-1-pyrroline-5-carboxylate + NADH + 2 H(+). It functions in the pathway amino-acid biosynthesis; L-proline biosynthesis; L-proline from L-glutamate 5-semialdehyde: step 1/1. Functionally, oxidoreductase that catalyzes the last step in proline biosynthesis, which corresponds to the reduction of pyrroline-5-carboxylate (P5C) to L-proline using NAD(P)H. Proline is synthesized from either glutamate or ornithine; both are converted to P5C, and then to proline via pyrroline-5-carboxylate reductases (PYCRs). PYCR3 is exclusively linked to the biosynthesis of proline from ornithine. The chain is Pyrroline-5-carboxylate reductase 3 from Mus musculus (Mouse).